A 136-amino-acid polypeptide reads, in one-letter code: UPF0213 protein AHA_3736 (136 aa).

Positions 17-92 constitute a GIY-YIG domain; that stretch reads SHWFIYMVRT…KQQSKAFKEQ (76 aa). Residues 114 to 136 are disordered; sequence QKRPRYAAAKEGSDNRECQRQVD. The segment covering 124-136 has biased composition (basic and acidic residues); it reads EGSDNRECQRQVD.

It belongs to the UPF0213 family.

The polypeptide is UPF0213 protein AHA_3736 (Aeromonas hydrophila subsp. hydrophila (strain ATCC 7966 / DSM 30187 / BCRC 13018 / CCUG 14551 / JCM 1027 / KCTC 2358 / NCIMB 9240 / NCTC 8049)).